The primary structure comprises 167 residues: Lipoprotein signal peptidase (167 aa).

4 consecutive transmembrane segments (helical) span residues 5-25 (ICST…LDLG), 42-62 (LIPY…SFLA), 70-90 (WFFA…MYRA), and 102-122 (ALII…GFVI). Active-site residues include aspartate 123 and aspartate 141. The chain crosses the membrane as a helical span at residues 137-157 (FNIADMAICIGAGLVIIDSFL).

It belongs to the peptidase A8 family.

It localises to the cell inner membrane. The enzyme catalyses Release of signal peptides from bacterial membrane prolipoproteins. Hydrolyzes -Xaa-Yaa-Zaa-|-(S,diacylglyceryl)Cys-, in which Xaa is hydrophobic (preferably Leu), and Yaa (Ala or Ser) and Zaa (Gly or Ala) have small, neutral side chains.. The protein operates within protein modification; lipoprotein biosynthesis (signal peptide cleavage). Its function is as follows. This protein specifically catalyzes the removal of signal peptides from prolipoproteins. The protein is Lipoprotein signal peptidase of Photorhabdus laumondii subsp. laumondii (strain DSM 15139 / CIP 105565 / TT01) (Photorhabdus luminescens subsp. laumondii).